The primary structure comprises 360 residues: UPF0324 membrane protein DVU_0123 (360 aa).

Transmembrane regions (helical) follow at residues 20 to 42 (VTES…FVAP), 57 to 79 (KDFI…PAVF), 100 to 122 (SYSL…VFLF), 142 to 164 (AACL…APAV), 171 to 193 (MAYS…PLIG), 203 to 225 (FGAF…FGFS), 232 to 254 (AGIY…AIMA), 278 to 297 (FPLF…AGVL), 310 to 327 (EWAF…TRLS), and 337 to 359 (FLFG…LLFM).

It belongs to the UPF0324 family.

It is found in the cell membrane. This chain is UPF0324 membrane protein DVU_0123, found in Nitratidesulfovibrio vulgaris (strain ATCC 29579 / DSM 644 / CCUG 34227 / NCIMB 8303 / VKM B-1760 / Hildenborough) (Desulfovibrio vulgaris).